Reading from the N-terminus, the 704-residue chain is Elongation factor G (704 aa).

Residues 8-291 (DRVRNIGIMA…AVIEYLASPV (284 aa)) form the tr-type G domain. GTP-binding positions include 17–24 (AHIDAGKT), 90–94 (DTPGH), and 144–147 (NKMD).

The protein belongs to the TRAFAC class translation factor GTPase superfamily. Classic translation factor GTPase family. EF-G/EF-2 subfamily.

It is found in the cytoplasm. Catalyzes the GTP-dependent ribosomal translocation step during translation elongation. During this step, the ribosome changes from the pre-translocational (PRE) to the post-translocational (POST) state as the newly formed A-site-bound peptidyl-tRNA and P-site-bound deacylated tRNA move to the P and E sites, respectively. Catalyzes the coordinated movement of the two tRNA molecules, the mRNA and conformational changes in the ribosome. The polypeptide is Elongation factor G (Chlorobium chlorochromatii (strain CaD3)).